We begin with the raw amino-acid sequence, 490 residues long: Mitochondrial-processing peptidase subunit beta (490 aa).

The transit peptide at 1 to 46 directs the protein to the mitochondrion; that stretch reads MAAAAVARAVLFSAARRRLCGFTERLLIGGAAGRSLYFGGNRLRST. His102 is a Zn(2+) binding site. Glu105 functions as the Proton acceptor in the catalytic mechanism. The Zn(2+) site is built by His106 and Glu182.

It belongs to the peptidase M16 family. Heterodimer of PMPCA (alpha) and PMPCB (beta) subunits, forming the mitochondrial processing protease (MPP) in which PMPCA is involved in substrate recognition and binding and PMPCB is the catalytic subunit. It depends on Zn(2+) as a cofactor.

It is found in the mitochondrion matrix. It carries out the reaction Release of N-terminal transit peptides from precursor proteins imported into the mitochondrion, typically with Arg in position P2.. Its activity is regulated as follows. Binding to PMPCA is required for catalytic activity. Its function is as follows. Catalytic subunit of the essential mitochondrial processing protease (MPP), which cleaves the mitochondrial sequence off newly imported precursors proteins. Preferentially, cleaves after an arginine at position P2. Required for PINK1 turnover by coupling PINK1 mitochondrial import and cleavage, which results in subsequent PINK1 proteolysis. In Bos taurus (Bovine), this protein is Mitochondrial-processing peptidase subunit beta (PMPCB).